The sequence spans 447 residues: GTPase Der (447 aa).

2 consecutive EngA-type G domains span residues 4-165 (KIIT…PEEE) and 180-357 (LQIV…KIWN). GTP contacts are provided by residues 10–17 (GRPNVGKS), 57–61 (DTPGL), 119–122 (NKCE), 186–193 (GRPNAGKS), 233–237 (DTAGL), and 298–301 (NKWD). The region spanning 358 to 443 (KKITTSKLNE…PIRFTYVKTK (86 aa)) is the KH-like domain.

The protein belongs to the TRAFAC class TrmE-Era-EngA-EngB-Septin-like GTPase superfamily. EngA (Der) GTPase family. In terms of assembly, associates with the 50S ribosomal subunit.

Its function is as follows. GTPase that plays an essential role in the late steps of ribosome biogenesis. This chain is GTPase Der, found in Rickettsia felis (strain ATCC VR-1525 / URRWXCal2) (Rickettsia azadi).